The sequence spans 637 residues: MNNQGRSILAWAALFIFVILLFNVFQSDGLLGVRNNITFSDFLTRVDEKTINSVKIQGRVIEGTANDGSTFSTYSPDYPDLVNRLTSNDVNIEVVPLETRMNTFLGFLISWFPMLLLIGVWVFFMRQMHGGGKAMGFGKSKARLLSDKGPKITFKDVAGIDEAKEELTEIVDFLRDPSKFQKLGGKIPKGCLLIGPPGTGKTLLAKAIAGEANVPFFSISGSDFVEMFVGVGASRVRDMFEQGKRNAPCIIFIDEIDAVGRHRGIGMGGGNDEREQTLNQMLVEMDGFEANEGVVIIAATNRPDVLDRALLRPGRFDRQIAVANPDINGREQILKVHLKKIKYNSTVLARIIARGTPGFSGAELANLVNEAALIAARLGKKEVDMHDMEEAKDKVLMGVVRRSIAMSEKEKRLTAYHEGGHALVGLYCPAASPIHKATIIPRGNALGMVQRLPETDEYSQNREQMESSIAVYMAGRVAEEIIFGRNKVTSGASSDIKGATNIARAMVTKAGLSDLIGPIFHGSNSDDMYGRQSSNEISEATAELIDAEVKRIITQGYEFAKDILTKHIDQLHTLANALIEYETLSGQQIKNLLSGRALDSEEENKFPFNDSHTIKIDKENLHEKVKSTKDKKENIIS.

Residues 1 to 6 lie on the Cytoplasmic side of the membrane; the sequence is MNNQGR. Residues 7 to 27 traverse the membrane as a helical segment; that stretch reads SILAWAALFIFVILLFNVFQS. At 28–103 the chain is on the periplasmic side; that stretch reads DGLLGVRNNI…VVPLETRMNT (76 aa). The chain crosses the membrane as a helical span at residues 104–124; it reads FLGFLISWFPMLLLIGVWVFF. Residues 125 to 637 lie on the Cytoplasmic side of the membrane; that stretch reads MRQMHGGGKA…TKDKKENIIS (513 aa). An ATP-binding site is contributed by 195-202; sequence GPPGTGKT. His417 serves as a coordination point for Zn(2+). The active site involves Glu418. 2 residues coordinate Zn(2+): His421 and Asp495.

The protein in the central section; belongs to the AAA ATPase family. In the C-terminal section; belongs to the peptidase M41 family. Homohexamer. The cofactor is Zn(2+).

The protein resides in the cell inner membrane. Its function is as follows. Acts as a processive, ATP-dependent zinc metallopeptidase for both cytoplasmic and membrane proteins. Plays a role in the quality control of integral membrane proteins. The protein is ATP-dependent zinc metalloprotease FtsH of Rickettsia prowazekii (strain Madrid E).